Here is a 450-residue protein sequence, read N- to C-terminus: Tubulin alpha-6 chain (450 aa).

GTP-binding residues include glutamine 11, glutamate 71, glycine 144, threonine 145, threonine 179, asparagine 206, and asparagine 228. Residue glutamate 71 participates in Mg(2+) binding. Residue glutamate 254 is part of the active site.

The protein belongs to the tubulin family. Dimer of alpha and beta chains. A typical microtubule is a hollow water-filled tube with an outer diameter of 25 nm and an inner diameter of 15 nM. Alpha-beta heterodimers associate head-to-tail to form protofilaments running lengthwise along the microtubule wall with the beta-tubulin subunit facing the microtubule plus end conferring a structural polarity. Microtubules usually have 13 protofilaments but different protofilament numbers can be found in some organisms and specialized cells. Mg(2+) serves as cofactor. In terms of processing, undergoes a tyrosination/detyrosination cycle, the cyclic removal and re-addition of a C-terminal tyrosine residue by the enzymes tubulin tyrosine carboxypeptidase (TTCP) and tubulin tyrosine ligase (TTL), respectively.

The protein resides in the cytoplasm. Its subcellular location is the cytoskeleton. The catalysed reaction is GTP + H2O = GDP + phosphate + H(+). In terms of biological role, tubulin is the major constituent of microtubules, a cylinder consisting of laterally associated linear protofilaments composed of alpha- and beta-tubulin heterodimers. Microtubules grow by the addition of GTP-tubulin dimers to the microtubule end, where a stabilizing cap forms. Below the cap, tubulin dimers are in GDP-bound state, owing to GTPase activity of alpha-tubulin. This is Tubulin alpha-6 chain (TUBA6) from Zea mays (Maize).